Reading from the N-terminus, the 214-residue chain is Adenylate kinase (214 aa).

ATP is bound at residue 10 to 15 (GAGKGT). An NMP region spans residues 30–59 (STGDIFRANIKNGTELGKKAKTYMDQGALV). AMP-binding positions include Thr31, Arg36, 57–59 (ALV), 85–88 (GFPR), and Gln92. The LID stretch occupies residues 126–163 (GRRACLNCGATYHIVFNPTKVEGKCDACGADTVLRDDD). Arg127 lines the ATP pocket. Positions 130 and 133 each coordinate Zn(2+). 136–137 (TY) serves as a coordination point for ATP. Positions 150 and 153 each coordinate Zn(2+). AMP is bound by residues Arg160 and Arg171. Position 199 (Lys199) interacts with ATP.

The protein belongs to the adenylate kinase family. In terms of assembly, monomer.

It is found in the cytoplasm. The enzyme catalyses AMP + ATP = 2 ADP. The protein operates within purine metabolism; AMP biosynthesis via salvage pathway; AMP from ADP: step 1/1. Its function is as follows. Catalyzes the reversible transfer of the terminal phosphate group between ATP and AMP. Plays an important role in cellular energy homeostasis and in adenine nucleotide metabolism. This chain is Adenylate kinase, found in Agathobacter rectalis (strain ATCC 33656 / DSM 3377 / JCM 17463 / KCTC 5835 / VPI 0990) (Eubacterium rectale).